A 106-amino-acid polypeptide reads, in one-letter code: uncharacterized protein (106 aa).

3 consecutive transmembrane segments (helical) span residues 5-27 (IFVI…GIII), 42-64 (AVAA…LAYM), and 76-98 (LPYI…TNFF).

Its subcellular location is the cell membrane. This is an uncharacterized protein from Archaeoglobus fulgidus (strain ATCC 49558 / DSM 4304 / JCM 9628 / NBRC 100126 / VC-16).